The following is a 540-amino-acid chain: Intestinal-type alkaline phosphatase 1 (540 aa).

Residues 1–20 (MQGDWVLLLLLGLRIHLSFG) form the signal peptide. D62 provides a ligand contact to Mg(2+). Zn(2+) is bound by residues D62 and S112. S112 serves as the catalytic Phosphoserine intermediate. A disulfide bridge connects residues C141 and C203. N142 carries N-linked (GlcNAc...) asparagine glycosylation. S175 is a binding site for Mg(2+). Ca(2+) contacts are provided by E236, F289, and E290. N301 carries N-linked (GlcNAc...) asparagine glycosylation. A Ca(2+)-binding site is contributed by D305. E331 lines the Mg(2+) pocket. Zn(2+) is bound by residues D336, H340, D377, and H378. N428 carries an N-linked (GlcNAc...) asparagine glycan. H452 provides a ligand contact to Zn(2+). A disulfide bridge connects residues C487 and C494. The GPI-anchor amidated asparagine moiety is linked to residue N511. Residues 512–540 (SAITMNNVLLSLQLLVSMLLLVGTALVVS) constitute a propeptide, removed in mature form.

This sequence belongs to the alkaline phosphatase family. Homodimer. Requires Mg(2+) as cofactor. The cofactor is Zn(2+). It depends on Ca(2+) as a cofactor.

It is found in the cell membrane. It catalyses the reaction a phosphate monoester + H2O = an alcohol + phosphate. Its function is as follows. Alkaline phosphatase that can hydrolyze various phosphate compounds. This chain is Intestinal-type alkaline phosphatase 1 (Alpi), found in Rattus norvegicus (Rat).